We begin with the raw amino-acid sequence, 79 residues long: MGGFTSIWHWVIVLLVIVLLFGAKKIPELAKGLGSGIKNFKKAVKDDEEEAKNEPKTLDAQATQTKAHESSEIKSKQES.

Residues 1-21 traverse the membrane as a helical segment; that stretch reads MGGFTSIWHWVIVLLVIVLLF. A disordered region spans residues 48 to 79; sequence EEEAKNEPKTLDAQATQTKAHESSEIKSKQES. Residues 66-79 are compositionally biased toward basic and acidic residues; that stretch reads KAHESSEIKSKQES.

It belongs to the TatA/E family. The Tat system comprises two distinct complexes: a TatABC complex, containing multiple copies of TatA, TatB and TatC subunits, and a separate TatA complex, containing only TatA subunits. Substrates initially bind to the TatABC complex, which probably triggers association of the separate TatA complex to form the active translocon.

It is found in the cell inner membrane. Its function is as follows. Part of the twin-arginine translocation (Tat) system that transports large folded proteins containing a characteristic twin-arginine motif in their signal peptide across membranes. TatA could form the protein-conducting channel of the Tat system. This is Sec-independent protein translocase protein TatA from Helicobacter pylori (strain P12).